A 151-amino-acid polypeptide reads, in one-letter code: Anti-CBASS protein Acb1 (151 aa).

Tyr-13 is a 3',3'-cGAMP binding site. Position 13 (Tyr-13) interacts with 3',3'-cUAMP. Catalysis depends on residues His-45 and Thr-47. 3',3'-cGAMP is bound at residue Tyr-108. Tyr-108 provides a ligand contact to 3',3'-cUAMP. Residues His-114 and Thr-116 contribute to the active site. Residues Glu-140 and Trp-146 each coordinate 3',3'-cGAMP. Residues Glu-140 and Trp-146 each contribute to the 3',3'-cUAMP site.

It belongs to the anti-CBASS protein Acb1 family.

The enzyme catalyses 3',3'-cUAMP + H2O = U[3'-5']pAp[3'] + H(+). It catalyses the reaction 3',3',3'-c-tri-AMP + H2O = A[3'-5']pA[3'-5']pAp[3'] + H(+). It carries out the reaction 3',3',3'-cAAG + H2O = G[3'-5']pA[3'-5']pAp[3'] + H(+). The catalysed reaction is 3',3',3'-cAAG + H2O = A[3'-5']pG[3'-5']pAp[3'] + H(+). The enzyme catalyses 3',3'-cGAMP + H2O = G[3'-5']pAp[3'] + H(+). Its function is as follows. Counteracts the host CBASS antiviral defense system. Phosphodiesterase that enables metal-independent hydrolysis of the host cyclic di- and trinucleotide CBASS signals such as 3'3'-cGAMP, 3'3'cUA, and 3'3'3'-cAAA. Does not cleave cGG or cA4. Besides evasion of the CBASS system, might also enable evasion of the type III CRISPR systems that use cA3 signals. The protein is Anti-CBASS protein Acb1 of Vibrio phage KVP40 (isolate Vibrio parahaemolyticus/Japan/Matsuzaki/1991) (KVP40).